We begin with the raw amino-acid sequence, 303 residues long: Uracil phosphoribosyltransferase (303 aa).

Residues 1–86 are unknown; sequence MHIIMKTILA…RYVSSTPTDS (86 aa). The segment at 87–303 is UPRTase; sequence LSSKPLAAVY…DRLCGTSNPS (217 aa). 5-phospho-alpha-D-ribose 1-diphosphate contacts are provided by residues arginine 170, arginine 195, and 222–230; that span reads DPMLATGGS. Residues isoleucine 285 and 290–292 each bind uracil; that span reads GDA. Aspartate 291 contributes to the 5-phospho-alpha-D-ribose 1-diphosphate binding site.

The protein belongs to the UPRTase family. Mg(2+) is required as a cofactor.

The enzyme catalyses UMP + diphosphate = 5-phospho-alpha-D-ribose 1-diphosphate + uracil. It functions in the pathway pyrimidine metabolism; UMP biosynthesis via salvage pathway; UMP from uracil: step 1/1. Allosterically activated by GTP. Its function is as follows. Catalyzes the conversion of uracil and 5-phospho-alpha-D-ribose 1-diphosphate (PRPP) to UMP and diphosphate. This Chlamydia muridarum (strain MoPn / Nigg) protein is Uracil phosphoribosyltransferase (upp).